A 208-amino-acid polypeptide reads, in one-letter code: Ribonuclease HII (208 aa).

One can recognise an RNase H type-2 domain in the interval 13-202 (DLVAGVDEVG…VRQAYEAREA (190 aa)). Aspartate 19, glutamate 20, and aspartate 111 together coordinate a divalent metal cation.

The protein belongs to the RNase HII family. Mn(2+) serves as cofactor. The cofactor is Mg(2+).

Its subcellular location is the cytoplasm. It catalyses the reaction Endonucleolytic cleavage to 5'-phosphomonoester.. Its function is as follows. Endonuclease that specifically degrades the RNA of RNA-DNA hybrids. The protein is Ribonuclease HII of Pseudomonas fluorescens (strain ATCC BAA-477 / NRRL B-23932 / Pf-5).